The sequence spans 142 residues: Protein SprT-like (142 aa).

One can recognise a SprT-like domain in the interval 4-138 (YVKKVSIEDF…FACGYCHGRL (135 aa)). Histidine 62 is a binding site for Zn(2+). Glutamate 63 is an active-site residue. Histidine 66 provides a ligand contact to Zn(2+).

The protein belongs to the SprT family. The cofactor is Zn(2+).

It is found in the cytoplasm. This chain is Protein SprT-like, found in Streptococcus agalactiae serotype Ia (strain ATCC 27591 / A909 / CDC SS700).